Consider the following 78-residue polypeptide: MVKLRLKRCGRKQRVIYRIVAIDVRSRRDGRALRKVGFYDPIKNQTYSNVPAILYFLEKGAQPTVTVHDISKKAEVFK.

This sequence belongs to the bacterial ribosomal protein bS16 family.

It is found in the plastid. The protein localises to the chloroplast. In Amborella trichopoda, this protein is Small ribosomal subunit protein bS16c.